A 1489-amino-acid polypeptide reads, in one-letter code: DNA-directed RNA polymerase subunit beta (1489 aa).

Belongs to the RNA polymerase beta chain family. In terms of assembly, the RNAP catalytic core consists of 2 alpha, 1 beta, 1 beta' and 1 omega subunit. When a sigma factor is associated with the core the holoenzyme is formed, which can initiate transcription.

The enzyme catalyses RNA(n) + a ribonucleoside 5'-triphosphate = RNA(n+1) + diphosphate. In terms of biological role, DNA-dependent RNA polymerase catalyzes the transcription of DNA into RNA using the four ribonucleoside triphosphates as substrates. This is DNA-directed RNA polymerase subunit beta from Koribacter versatilis (strain Ellin345).